The sequence spans 179 residues: MARLQDQYREKIAPALIEKFGYTTPMQVPRITKITLNMGVSEAVADKKVMDNAVADMAKIAGQKPVVTKAKKAIAGFKIREDLPIGCMVTLRGVQMYEFLDRFVTVALPRVRDFRGISGRAFDGRGNYNIGVKEQIIFPEIEYDKVDALRGLNISITTTAKTDEECKALLTAFRFPFKN.

The protein belongs to the universal ribosomal protein uL5 family. Part of the 50S ribosomal subunit; part of the 5S rRNA/L5/L18/L25 subcomplex. Contacts the 5S rRNA and the P site tRNA. Forms a bridge to the 30S subunit in the 70S ribosome.

This is one of the proteins that bind and probably mediate the attachment of the 5S RNA into the large ribosomal subunit, where it forms part of the central protuberance. In the 70S ribosome it contacts protein S13 of the 30S subunit (bridge B1b), connecting the 2 subunits; this bridge is implicated in subunit movement. Contacts the P site tRNA; the 5S rRNA and some of its associated proteins might help stabilize positioning of ribosome-bound tRNAs. This Polaromonas naphthalenivorans (strain CJ2) protein is Large ribosomal subunit protein uL5.